Here is a 424-residue protein sequence, read N- to C-terminus: MLQDIMNTKKIKLHDCHFGSPLCDPSPAPHLLSSAAAAGLSFHPGLVSSAAQHQQHGAGGWLHEEYYAPRSSPPSSLLAQTCVGSNATAFYAAENLPQFDFPALGTAAAAAAKAPFRSSESELYRPVDPLLLRADHSVRTYYVRPQKRDSGERTPLPPPSQQQHQDRIHGLFAGAPTTRLLSGEPKIHSFPPQVAAKPILPAMDAPSLQNQMENQLTRNCIGAATPVTPTGNLAGSGAPSKTRIRWTQDLHERFVDCVNQLGGADKATPKGILKLMNSDGLTIYHIKSHLQKYRIAKYMPASSEGKQLEKRATGNDMQNLDPKTGMQITEALRVQLDVQRRLHEQLEIQRNLQLRIEEQGKRLQKMFEDQLKASRSVMEPQELDDVVAFAAGDGDDDAFDDVDVQLLAVAGSGYDDAGFQSKIS.

The tract at residues 144-165 (RPQKRDSGERTPLPPPSQQQHQ) is disordered. One can recognise an HTH myb-type domain in the interval 238-298 (APSKTRIRWT…HLQKYRIAKY (61 aa)). Positions 269–294 (PKGILKLMNSDGLTIYHIKSHLQKYR) form a DNA-binding region, H-T-H motif. The stretch at 326–391 (MQITEALRVQ…ELDDVVAFAA (66 aa)) forms a coiled coil. Residues 342–347 (LHEQLE) carry the LHEQLE motif.

It belongs to the MYB-CC family. In terms of assembly, interacts with SPX1 and SPX2 in the nucleus; these interactions prevent binding to the promoters of target genes, thus regulating negatively leaf inclination in response to phosphate (Pi) starvation. As to quaternary structure, homodimer. Interacts with PHR2 in the nucleus. In terms of tissue distribution, mostly expressed in roots and leaves blades and, to a lower extent, in leaves sheaths, culms and panicles. Localized in leaves lamina joints. As to expression, expressed equally in shoots and roots. Mostly expressed in shoots and, to a lower extent, in roots.

The protein resides in the nucleus. Its function is as follows. Transcription factor binding to specific DNA sequences of target genes promoters, such as the motif R1BS 5'-NAKATNCN-3' and the motif P1BS 5'-GNATATNC-3' to trigger their expression. Nitrate-induced component involved in modulating phosphate (Pi) response and homeostasis together with PHR2; activates directly the expression of Pi starvation-induced (PSI) genes upon nitrate disponibility, thus triggering the nitrate-induced phosphate response (NIPR) promoting Pi uptake activity. Binds preferentially to the P1BS motif 5'-GNATATNC-3' in target genes promoters. In terms of biological role, binds preferentially to the R1BS motif 5'-NAKATNCN-3' in target genes promoters, including several genes involved in the plant hormone signal transduction pathway. Involved in the shoot architecture; positively regulates leaf inclination by affecting lamina joint cell elongation via the direct promotion of ILI4/BU1 and BC1 genes expression, especially in response to phosphate (Pi) availability. Regulates both brassinolide (BL) biosynthesis and signaling by directly activating BL-biosynthesis and signaling genes. This is Myb family transcription factor RLI1 from Oryza sativa subsp. japonica (Rice).